The primary structure comprises 100 residues: Large ribosomal subunit protein uL23 (100 aa).

This sequence belongs to the universal ribosomal protein uL23 family. In terms of assembly, part of the 50S ribosomal subunit. Contacts protein L29, and trigger factor when it is bound to the ribosome.

Functionally, one of the early assembly proteins it binds 23S rRNA. One of the proteins that surrounds the polypeptide exit tunnel on the outside of the ribosome. Forms the main docking site for trigger factor binding to the ribosome. This chain is Large ribosomal subunit protein uL23, found in Proteus mirabilis (strain HI4320).